The sequence spans 329 residues: Malate dehydrogenase (329 aa).

12–18 (GAAGQIC) contacts NAD(+). The substrate site is built by arginine 95 and arginine 101. NAD(+) contacts are provided by residues asparagine 108, glutamine 115, and 132-134 (VGN). Substrate contacts are provided by asparagine 134 and arginine 165. The active-site Proton acceptor is histidine 190.

It belongs to the LDH/MDH superfamily. MDH type 2 family. Homodimer.

It carries out the reaction (S)-malate + NAD(+) = oxaloacetate + NADH + H(+). Functionally, catalyzes the reversible oxidation of malate to oxaloacetate. In Aquaspirillum arcticum, this protein is Malate dehydrogenase.